A 445-amino-acid polypeptide reads, in one-letter code: tRNA-2-methylthio-N(6)-dimethylallyladenosine synthase (445 aa).

The region spanning 3–124 is the MTTase N-terminal domain; the sequence is KKLYIKTYGC…LPELISKVVR (122 aa). [4Fe-4S] cluster-binding residues include Cys-12, Cys-48, Cys-87, Cys-162, Cys-166, and Cys-169. The 233-residue stretch at 148–380 folds into the Radical SAM core domain; the sequence is YTQGASSFIS…QKELATQQLA (233 aa). Residues 383-445 enclose the TRAM domain; sequence ESCVGSTMKV…ALNSLTGEIL (63 aa).

Belongs to the methylthiotransferase family. MiaB subfamily. As to quaternary structure, monomer. [4Fe-4S] cluster is required as a cofactor.

The protein localises to the cytoplasm. The catalysed reaction is N(6)-dimethylallyladenosine(37) in tRNA + (sulfur carrier)-SH + AH2 + 2 S-adenosyl-L-methionine = 2-methylsulfanyl-N(6)-dimethylallyladenosine(37) in tRNA + (sulfur carrier)-H + 5'-deoxyadenosine + L-methionine + A + S-adenosyl-L-homocysteine + 2 H(+). Its function is as follows. Catalyzes the methylthiolation of N6-(dimethylallyl)adenosine (i(6)A), leading to the formation of 2-methylthio-N6-(dimethylallyl)adenosine (ms(2)i(6)A) at position 37 in tRNAs that read codons beginning with uridine. The protein is tRNA-2-methylthio-N(6)-dimethylallyladenosine synthase of Rickettsia typhi (strain ATCC VR-144 / Wilmington).